Consider the following 218-residue polypeptide: Capsid protein (218 aa).

Residue methionine 1 is modified to N-acetylmethionine; by host. Positions 1 to 10 (MDKSESTSAG) are enriched in low complexity. Positions 1–30 (MDKSESTSAGRNRRRRPRRGSRSASSSADA) are disordered. The span at 11-21 (RNRRRRPRRGS) shows a compositional bias: basic residues.

Belongs to the cucumovirus capsid protein family.

The protein resides in the virion. Functionally, capsid protein. Probably binds RNA and plays a role in packaging. The polypeptide is Capsid protein (Cucumber mosaic virus (strain P6) (CMV)).